A 260-amino-acid chain; its full sequence is Glutathione S-transferase domain-containing protein DDB_G0274223 (260 aa).

The 90-residue stretch at 7-96 (KVDYIFYTNN…YLAQKYNTFL (90 aa)) folds into the GST N-terminal domain. One can recognise a GST C-terminal domain in the interval 102–233 (NPHENSDVIT…GFKTFNPSAL (132 aa)).

It belongs to the GST superfamily.

The protein is Glutathione S-transferase domain-containing protein DDB_G0274223 of Dictyostelium discoideum (Social amoeba).